A 1391-amino-acid chain; its full sequence is DNA-directed RNA polymerase subunit beta' (1391 aa).

4 residues coordinate Zn(2+): cysteine 72, cysteine 74, cysteine 87, and cysteine 90. Residues aspartate 462, aspartate 464, and aspartate 466 each coordinate Mg(2+). 4 residues coordinate Zn(2+): cysteine 816, cysteine 890, cysteine 897, and cysteine 900.

It belongs to the RNA polymerase beta' chain family. The RNAP catalytic core consists of 2 alpha, 1 beta, 1 beta' and 1 omega subunit. When a sigma factor is associated with the core the holoenzyme is formed, which can initiate transcription. Mg(2+) serves as cofactor. It depends on Zn(2+) as a cofactor.

The enzyme catalyses RNA(n) + a ribonucleoside 5'-triphosphate = RNA(n+1) + diphosphate. DNA-dependent RNA polymerase catalyzes the transcription of DNA into RNA using the four ribonucleoside triphosphates as substrates. This is DNA-directed RNA polymerase subunit beta' from Neisseria meningitidis serogroup C (strain 053442).